A 679-amino-acid chain; its full sequence is uncharacterized protein (679 aa).

Helical transmembrane passes span 23–41 (YALR…AYYL), 46–65 (PYWA…GGVI), 72–90 (IAGS…GHTL), 94–113 (WLFL…ACAH), 120–142 (YAFQ…IVEI), 157–179 (IVGI…GTAL), 362–381 (WSGV…SIGA), 385–404 (SGPG…SIVA), 411–433 (SLLM…GLMV), 438–455 (LWQF…MQLL), 462–481 (LAGL…AVTN), and 496–515 (AKIV…RPGS).

This sequence belongs to the aromatic acid exporter ArAE (TC 2.A.85) family.

The protein localises to the cell membrane. This is an uncharacterized protein from Salmonella typhimurium (strain LT2 / SGSC1412 / ATCC 700720).